Reading from the N-terminus, the 288-residue chain is Keratin-associated protein 5-4 (288 aa).

9 tandem repeats follow at residues 49–52 (CCVP), 55–58 (CCKP), 61–64 (CCVP), 201–204 (CCKP), 220–223 (CCKP), 239–242 (CCKP), 249–252 (CCKP), 268–271 (CCNP), and 278–281 (CCVP). Residues 49 to 281 (CCVPICCCKP…CCSQSSCCVP (233 aa)) are 9 X 4 AA repeats of C-C-X-P.

Belongs to the KRTAP type 5 family. Interacts with hair keratins. In terms of tissue distribution, restricted to hair root, not detected in any other tissues.

Functionally, in the hair cortex, hair keratin intermediate filaments are embedded in an interfilamentous matrix, consisting of hair keratin-associated protein (KRTAP), which are essential for the formation of a rigid and resistant hair shaft through their extensive disulfide bond cross-linking with abundant cysteine residues of hair keratins. The matrix proteins include the high-sulfur and high-glycine-tyrosine keratins. This chain is Keratin-associated protein 5-4 (KRTAP5-4), found in Homo sapiens (Human).